We begin with the raw amino-acid sequence, 184 residues long: ATP-dependent protease subunit HslV (184 aa).

Residue Thr12 is part of the active site. Residues Gly167, Cys170, and Thr173 each coordinate Na(+).

It belongs to the peptidase T1B family. HslV subfamily. As to quaternary structure, a double ring-shaped homohexamer of HslV is capped on each side by a ring-shaped HslU homohexamer. The assembly of the HslU/HslV complex is dependent on binding of ATP.

The protein resides in the cytoplasm. It catalyses the reaction ATP-dependent cleavage of peptide bonds with broad specificity.. Allosterically activated by HslU binding. In terms of biological role, protease subunit of a proteasome-like degradation complex believed to be a general protein degrading machinery. The sequence is that of ATP-dependent protease subunit HslV from Wolbachia sp. subsp. Drosophila simulans (strain wRi).